Here is a 114-residue protein sequence, read N- to C-terminus: Monothiol glutaredoxin-S8 (114 aa).

A Glutaredoxin domain is found at 1-113 (MDRVTRLASQ…PLLRDAGALW (113 aa)). Cys-21 lines the [2Fe-2S] cluster pocket.

The protein belongs to the glutaredoxin family. CC-type subfamily.

It localises to the cytoplasm. Its function is as follows. May only reduce GSH-thiol disulfides, but not protein disulfides. This Oryza sativa subsp. japonica (Rice) protein is Monothiol glutaredoxin-S8 (GRXS8).